A 566-amino-acid polypeptide reads, in one-letter code: Unconventional myosin-VIIa (566 aa).

A Myosin motor domain is found at 67-566; sequence MMEDMIQHLG…AGVVYYESQG (500 aa). An ATP-binding site is contributed by 160-167; the sequence is GESGAGKT.

This sequence belongs to the TRAFAC class myosin-kinesin ATPase superfamily. Myosin family. Might homodimerize in a two headed molecule through the formation of a coiled-coil rod. Identified in a complex with USH1C and USH1G. Interacts with MYRIP. Interacts with RPE65. Interacts with CIB2. May interact with CALM. Interacts with WHRN. Interacts with PLEKHB1 (via PH domain). Interacts with PCDH15. Interacts with TWF2. Interacts with USH1G. Interacts with MYH9. Interacts (via MyTH4-FERM domains) with cytoplasmic regions of ADGRV1 and USH2A. Interacts with PDZD7 (via MyTH4-FERM domains). Interacts with CALML4.

It is found in the cytoplasm. The protein resides in the cell cortex. The protein localises to the cytoskeleton. It localises to the synapse. Myosins are actin-based motor molecules with ATPase activity. Unconventional myosins serve in intracellular movements. Their highly divergent tails bind to membranous compartments, which are then moved relative to actin filaments. In the retina, plays an important role in the renewal of the outer photoreceptor disks. Plays an important role in the distribution and migration of retinal pigment epithelial (RPE) melanosomes and phagosomes, and in the regulation of opsin transport in retinal photoreceptors. In the inner ear, plays an important role in differentiation, morphogenesis and organization of cochlear hair cell bundles. Motor protein that is a part of the functional network formed by USH1C, USH1G, CDH23 and MYO7A that mediates mechanotransduction in cochlear hair cells. Required for normal hearing. Involved in hair-cell vesicle trafficking of aminoglycosides, which are known to induce ototoxicity. This Sus scrofa (Pig) protein is Unconventional myosin-VIIa (MYO7A).